Here is a 453-residue protein sequence, read N- to C-terminus: uncharacterized protein (453 aa).

Residues cysteine 74, cysteine 80, cysteine 83, and cysteine 162 each coordinate [4Fe-4S] cluster. 4 residues coordinate S-adenosyl-L-methionine: glutamine 286, tyrosine 315, glutamate 336, and aspartate 384. Catalysis depends on cysteine 411, which acts as the Nucleophile.

It belongs to the class I-like SAM-binding methyltransferase superfamily. RNA M5U methyltransferase family.

This is an uncharacterized protein from Staphylococcus aureus (strain MRSA252).